A 336-amino-acid polypeptide reads, in one-letter code: Anthranilate phosphoribosyltransferase (336 aa).

Residues glycine 82, 85–86 (GD), threonine 90, 92–95 (NIST), 110–118 (KHGNRSVSS), and serine 122 contribute to the 5-phospho-alpha-D-ribose 1-diphosphate site. Glycine 82 lines the anthranilate pocket. Residue serine 94 coordinates Mg(2+). Asparagine 113 serves as a coordination point for anthranilate. Arginine 168 contributes to the anthranilate binding site. Mg(2+) is bound by residues aspartate 227 and glutamate 228.

It belongs to the anthranilate phosphoribosyltransferase family. As to quaternary structure, homodimer. Requires Mg(2+) as cofactor.

The enzyme catalyses N-(5-phospho-beta-D-ribosyl)anthranilate + diphosphate = 5-phospho-alpha-D-ribose 1-diphosphate + anthranilate. It functions in the pathway amino-acid biosynthesis; L-tryptophan biosynthesis; L-tryptophan from chorismate: step 2/5. Catalyzes the transfer of the phosphoribosyl group of 5-phosphorylribose-1-pyrophosphate (PRPP) to anthranilate to yield N-(5'-phosphoribosyl)-anthranilate (PRA). The sequence is that of Anthranilate phosphoribosyltransferase from Leptospira interrogans serogroup Icterohaemorrhagiae serovar copenhageni (strain Fiocruz L1-130).